The primary structure comprises 125 residues: Large ribosomal subunit protein bL19 (125 aa).

The protein belongs to the bacterial ribosomal protein bL19 family.

This protein is located at the 30S-50S ribosomal subunit interface and may play a role in the structure and function of the aminoacyl-tRNA binding site. The protein is Large ribosomal subunit protein bL19 of Ehrlichia ruminantium (strain Gardel).